The chain runs to 408 residues: MYSPDTTKYLIHLILQIEGVVDKPDVVGAIFGQTEGLLGEDLDLRDLQRTGRVGRIDVQITTKRGETKGVILISSSLDRAETALLASSLETIDRVGPCTAHVRVDRIEDIRVTKRRKIVERAKELLLEDFDEGSINSDDLLDEVREAIRIEKLEYLGEEKVHAGPNVIDSDAIIIVEGRADVINLLRYGIKNAVAVEGTNVPRIIIDLCSQKTATTLLDGDRGGELILRELLQVAEIDFVAYSPRGKSVEEMSRKEIVKALRNKVPAVGIIDQPPAEENVERLPPSAAPAEVRAPAGAGRTSEGERPPRREWDSKPPSTLGEHMADVRDKKIARFLSPDYTVLLESNATDVEGALQNLNGDVEGLVVDRIIDQKLLDQLGGRDIEFVAARDFKGIIKRPLSIRLIKIG.

Positions 171-250 constitute a Toprim domain; that stretch reads DAIIIVEGRA…AYSPRGKSVE (80 aa). Mg(2+) is bound by residues Glu-177, Asp-219, and Asp-221. The segment at 276–323 is disordered; sequence AEENVERLPPSAAPAEVRAPAGAGRTSEGERPPRREWDSKPPSTLGEH. Low complexity predominate over residues 284 to 298; it reads PPSAAPAEVRAPAGA. Basic and acidic residues predominate over residues 302–314; it reads SEGERPPRREWDS.

This sequence belongs to the archaeal DnaG primase family. In terms of assembly, forms a ternary complex with MCM helicase and DNA. Mg(2+) is required as a cofactor.

The catalysed reaction is ssDNA + n NTP = ssDNA/pppN(pN)n-1 hybrid + (n-1) diphosphate.. RNA polymerase that catalyzes the synthesis of short RNA molecules used as primers for DNA polymerase during DNA replication. This Methanoculleus marisnigri (strain ATCC 35101 / DSM 1498 / JR1) protein is DNA primase DnaG.